A 186-amino-acid polypeptide reads, in one-letter code: UPF0340 protein M6_Spy1622 (186 aa).

This sequence belongs to the UPF0340 family.

The sequence is that of UPF0340 protein M6_Spy1622 from Streptococcus pyogenes serotype M6 (strain ATCC BAA-946 / MGAS10394).